A 201-amino-acid polypeptide reads, in one-letter code: Thymidylate kinase (201 aa).

Residue 7–14 coordinates ATP; that stretch reads GIDGSGKS.

Belongs to the thymidylate kinase family.

The catalysed reaction is dTMP + ATP = dTDP + ADP. Its function is as follows. Phosphorylation of dTMP to form dTDP in both de novo and salvage pathways of dTTP synthesis. In Thermosipho africanus (strain TCF52B), this protein is Thymidylate kinase.